Here is a 182-residue protein sequence, read N- to C-terminus: Acireductone dioxygenase (182 aa).

The Fe(2+) site is built by H100, H102, E106, and H145. Ni(2+) is bound by residues H100, H102, E106, and H145.

The protein belongs to the acireductone dioxygenase (ARD) family. In terms of assembly, monomer. Requires Fe(2+) as cofactor. Ni(2+) serves as cofactor.

The enzyme catalyses 1,2-dihydroxy-5-(methylsulfanyl)pent-1-en-3-one + O2 = 3-(methylsulfanyl)propanoate + CO + formate + 2 H(+). It catalyses the reaction 1,2-dihydroxy-5-(methylsulfanyl)pent-1-en-3-one + O2 = 4-methylsulfanyl-2-oxobutanoate + formate + 2 H(+). It functions in the pathway amino-acid biosynthesis; L-methionine biosynthesis via salvage pathway; L-methionine from S-methyl-5-thio-alpha-D-ribose 1-phosphate: step 5/6. In terms of biological role, catalyzes 2 different reactions between oxygen and the acireductone 1,2-dihydroxy-3-keto-5-methylthiopentene (DHK-MTPene) depending upon the metal bound in the active site. Fe-containing acireductone dioxygenase (Fe-ARD) produces formate and 2-keto-4-methylthiobutyrate (KMTB), the alpha-ketoacid precursor of methionine in the methionine recycle pathway. Ni-containing acireductone dioxygenase (Ni-ARD) produces methylthiopropionate, carbon monoxide and formate, and does not lie on the methionine recycle pathway. The sequence is that of Acireductone dioxygenase from Trichormus variabilis (strain ATCC 29413 / PCC 7937) (Anabaena variabilis).